Here is a 403-residue protein sequence, read N- to C-terminus: Glyceraldehyde-3-phosphate dehydrogenase A, chloroplastic (403 aa).

Residues 1–66 constitute a chloroplast transit peptide; the sequence is MASSMLSATT…GGPRRAPTEA (66 aa). Residues 77–78, Asp102, and Arg147 contribute to the NADP(+) site; that span reads RI. Residues 219-221, Thr250, Arg265, 278-279, and Arg301 each bind D-glyceraldehyde 3-phosphate; these read SCT and TG. Residue Cys220 is the Nucleophile of the active site. Residue Asn383 coordinates NADP(+).

Belongs to the glyceraldehyde-3-phosphate dehydrogenase family. Tetramer of either four A chains (GAPDH 2) or two A and two B chains (GAPDH 1).

The protein localises to the plastid. The protein resides in the chloroplast. It carries out the reaction D-glyceraldehyde 3-phosphate + phosphate + NADP(+) = (2R)-3-phospho-glyceroyl phosphate + NADPH + H(+). It functions in the pathway carbohydrate biosynthesis; Calvin cycle. The chain is Glyceraldehyde-3-phosphate dehydrogenase A, chloroplastic (GAPA) from Zea mays (Maize).